The following is a 103-amino-acid chain: Small ribosomal subunit protein uS10 (103 aa).

This sequence belongs to the universal ribosomal protein uS10 family. As to quaternary structure, part of the 30S ribosomal subunit.

Involved in the binding of tRNA to the ribosomes. The sequence is that of Small ribosomal subunit protein uS10 from Leptothrix cholodnii (strain ATCC 51168 / LMG 8142 / SP-6) (Leptothrix discophora (strain SP-6)).